Reading from the N-terminus, the 165-residue chain is MALNLQDKQAIVAEVTEVAKGALSAVVADSRGVTVDKMTELRKAGREAGVYMRVVRNTLMRRVVEGSQFECLKDTFVGPTLIAFSMEHPGAAARLFKAFAKDNAKFEVKAAAFEGELIPAAQIDRLATLPTYEEAIARLMATMKEAAAGKLVRTLAALRDQKEAA.

The protein belongs to the universal ribosomal protein uL10 family. As to quaternary structure, part of the ribosomal stalk of the 50S ribosomal subunit. The N-terminus interacts with L11 and the large rRNA to form the base of the stalk. The C-terminus forms an elongated spine to which L12 dimers bind in a sequential fashion forming a multimeric L10(L12)X complex.

Its function is as follows. Forms part of the ribosomal stalk, playing a central role in the interaction of the ribosome with GTP-bound translation factors. This Edwardsiella ictaluri (strain 93-146) protein is Large ribosomal subunit protein uL10.